The chain runs to 74 residues: Antitoxin VapB39 (74 aa).

In terms of biological role, antitoxin component of a type II toxin-antitoxin (TA) system. The protein is Antitoxin VapB39 (vapB39) of Mycobacterium tuberculosis (strain CDC 1551 / Oshkosh).